Reading from the N-terminus, the 586-residue chain is Actin-related protein 9 (586 aa).

A disordered region spans residues 141–169; that stretch reads STPIVDKDADVDPLQRSTPDDTEPNSEEN.

The protein belongs to the actin family. ARP8 subfamily.

This chain is Actin-related protein 9 (ARP9), found in Oryza sativa subsp. japonica (Rice).